Consider the following 240-residue polypeptide: Large ribosomal subunit protein uL2 (240 aa).

Positions 1 to 11 (MGKRLISQNRG) are enriched in polar residues. 2 disordered regions span residues 1–28 (MGKR…KGAV) and 206–240 (GGGR…TGRK). Composition is skewed to basic residues over residues 13–28 (GTPK…KGAV) and 224–240 (SPGR…TGRK).

It belongs to the universal ribosomal protein uL2 family. As to quaternary structure, part of the 50S ribosomal subunit. Forms a bridge to the 30S subunit in the 70S ribosome.

In terms of biological role, one of the primary rRNA binding proteins. Required for association of the 30S and 50S subunits to form the 70S ribosome, for tRNA binding and peptide bond formation. It has been suggested to have peptidyltransferase activity; this is somewhat controversial. Makes several contacts with the 16S rRNA in the 70S ribosome. This is Large ribosomal subunit protein uL2 from Methanococcus maripaludis (strain C7 / ATCC BAA-1331).